The sequence spans 320 residues: RNA polymerase sigma factor SigA2 (320 aa).

The sigma-70 factor domain-2 stretch occupies residues 89–159 (MIEANLRLVV…TRAIAQQSRT (71 aa)). Positions 113–116 (DLIQ) match the Interaction with polymerase core subunit RpoC motif. Residues 168-243 (EKLNKLKKTQ…EDEQSSPSDY (76 aa)) are sigma-70 factor domain-3. Residues 256–310 (LMAELTPQQQAVIALRYGLDEGDSLSLAKVGERLNISRERVRKLERQAMDHLRRR) form a sigma-70 factor domain-4 region. Positions 282-301 (LAKVGERLNISRERVRKLER) form a DNA-binding region, H-T-H motif.

The protein belongs to the sigma-70 factor family.

It is found in the cytoplasm. Sigma factors are initiation factors that promote the attachment of RNA polymerase to specific initiation sites and are then released. This sigma factor is a component of the biological clock pathway that affects the circadian expression of a subset of genes in this bacterium. The protein is RNA polymerase sigma factor SigA2 (sigA2) of Synechococcus elongatus (strain ATCC 33912 / PCC 7942 / FACHB-805) (Anacystis nidulans R2).